The following is a 227-amino-acid chain: Translation initiation factor 6 (227 aa).

The protein belongs to the eIF-6 family.

Its function is as follows. Binds to the 50S ribosomal subunit and prevents its association with the 30S ribosomal subunit to form the 70S initiation complex. The protein is Translation initiation factor 6 of Methanococcus aeolicus (strain ATCC BAA-1280 / DSM 17508 / OCM 812 / Nankai-3).